The following is a 300-amino-acid chain: ClpXP adapter protein SpxH (300 aa).

Belongs to the SpxH family. Interacts with Spx.

It localises to the cytoplasm. Functionally, adapter protein required for efficient degradation of Spx by ClpXP under non-stress conditions. Interaction with Spx stabilizes Spx and exposes the C-terminus of Spx for recognition and proteolysis by ClpXP. This chain is ClpXP adapter protein SpxH, found in Shouchella clausii (strain KSM-K16) (Alkalihalobacillus clausii).